The sequence spans 76 residues: UPF0154 protein LCA_1273 (76 aa).

A helical membrane pass occupies residues 3–23; the sequence is IGIGVLIFVIGALLGAVAGFF. The disordered stretch occupies residues 55–76; it reads PSEKKLNQMMSSMKAQQKRSKK.

The protein belongs to the UPF0154 family.

It localises to the cell membrane. This Latilactobacillus sakei subsp. sakei (strain 23K) (Lactobacillus sakei subsp. sakei) protein is UPF0154 protein LCA_1273.